The sequence spans 240 residues: Putative truncated effector protein hopW1-2 (240 aa).

Positions M1–P32 are disordered. A compositionally biased stretch (low complexity) spans T9–S23.

It belongs to the HopW family.

The sequence is that of Putative truncated effector protein hopW1-2 (hopW1-2) from Pseudomonas syringae pv. maculicola.